A 222-amino-acid polypeptide reads, in one-letter code: N-(5'-phosphoribosyl)anthranilate isomerase (222 aa).

The protein belongs to the TrpF family.

The catalysed reaction is N-(5-phospho-beta-D-ribosyl)anthranilate = 1-(2-carboxyphenylamino)-1-deoxy-D-ribulose 5-phosphate. Its pathway is amino-acid biosynthesis; L-tryptophan biosynthesis; L-tryptophan from chorismate: step 3/5. The chain is N-(5'-phosphoribosyl)anthranilate isomerase from Rhizobium etli (strain ATCC 51251 / DSM 11541 / JCM 21823 / NBRC 15573 / CFN 42).